The chain runs to 282 residues: ATP phosphoribosyltransferase (282 aa).

The protein belongs to the ATP phosphoribosyltransferase family. Long subfamily. Mg(2+) serves as cofactor.

The protein resides in the cytoplasm. It carries out the reaction 1-(5-phospho-beta-D-ribosyl)-ATP + diphosphate = 5-phospho-alpha-D-ribose 1-diphosphate + ATP. It participates in amino-acid biosynthesis; L-histidine biosynthesis; L-histidine from 5-phospho-alpha-D-ribose 1-diphosphate: step 1/9. Its activity is regulated as follows. Feedback inhibited by histidine. Its function is as follows. Catalyzes the condensation of ATP and 5-phosphoribose 1-diphosphate to form N'-(5'-phosphoribosyl)-ATP (PR-ATP). Has a crucial role in the pathway because the rate of histidine biosynthesis seems to be controlled primarily by regulation of HisG enzymatic activity. In Halobacterium salinarum (strain ATCC 29341 / DSM 671 / R1), this protein is ATP phosphoribosyltransferase.